The following is a 324-amino-acid chain: Olfactory receptor 5T17 (324 aa).

Topologically, residues 1-37 (MPRTPSYTNTKTTQVNNVTEITVFILLGFTDDVDMNI) are extracellular. N-linked (GlcNAc...) asparagine glycosylation is present at Asn17. A helical transmembrane segment spans residues 38 to 58 (FLFILFLAIYVVTLIGNLGLV). Topologically, residues 59–66 (VLVIEDSR) are cytoplasmic. Residues 67–87 (LHNPMYYFLTVLSSLDACFSS) form a helical membrane-spanning segment. At 88–111 (VLTPKMLVNFLSKNKSISFAGCAT) the chain is on the extracellular side. An N-linked (GlcNAc...) asparagine glycan is attached at Asn101. Cys109 and Cys201 are disulfide-bonded. A helical transmembrane segment spans residues 112–132 (QMLLFVTFGTTECFLLAAMAY). The Cytoplasmic segment spans residues 133–145 (DRYLAIYSPLLYA). Residues 146 to 166 (VRMSPRVYVPLIIASYTGGIL) traverse the membrane as a helical segment. Residues 167-208 (HATIHTVATFSLSFCGSNEIRHVFCDIPPLLALSCSDTHLNQ) are Extracellular-facing. A helical membrane pass occupies residues 209–229 (LLLFYCAGSIELITILIVLVS). The Cytoplasmic segment spans residues 230-249 (YGFVLLAILKINSAEGRRKI). Residues 250–270 (FSTCGAHLTGVSIFHGTILFM) traverse the membrane as a helical segment. At 271-283 (YVRPSSNYTLEQD) the chain is on the extracellular side. N-linked (GlcNAc...) asparagine glycosylation is present at Asn277. The helical transmembrane segment at 284-304 (MVVSTFYTIVIPMLNPIIYSL) threads the bilayer. The Cytoplasmic portion of the chain corresponds to 305–324 (RNKDVKEAMRKLLKRKLVHE).

This sequence belongs to the G-protein coupled receptor 1 family.

It localises to the cell membrane. In terms of biological role, potential odorant receptor. The sequence is that of Olfactory receptor 5T17 from Mus musculus (Mouse).